The primary structure comprises 374 residues: tRNA-specific 2-thiouridylase MnmA (374 aa).

Residues 17–24 (GMSGGVDS) and methionine 43 contribute to the ATP site. Positions 103 to 105 (NPD) are interaction with target base in tRNA. Catalysis depends on cysteine 108, which acts as the Nucleophile. Cysteine 108 and cysteine 204 are joined by a disulfide. Residue glycine 132 participates in ATP binding. The interval 154–156 (KDQ) is interaction with tRNA. Catalysis depends on cysteine 204, which acts as the Cysteine persulfide intermediate. The segment at 316 to 317 (RY) is interaction with tRNA.

This sequence belongs to the MnmA/TRMU family.

The protein localises to the cytoplasm. It carries out the reaction S-sulfanyl-L-cysteinyl-[protein] + uridine(34) in tRNA + AH2 + ATP = 2-thiouridine(34) in tRNA + L-cysteinyl-[protein] + A + AMP + diphosphate + H(+). Its function is as follows. Catalyzes the 2-thiolation of uridine at the wobble position (U34) of tRNA, leading to the formation of s(2)U34. The protein is tRNA-specific 2-thiouridylase MnmA of Pseudomonas putida (strain GB-1).